A 417-amino-acid polypeptide reads, in one-letter code: Phosphoglycerate kinase (417 aa).

(2R)-3-phosphoglycerate contacts are provided by Val23, Asp24, Phe25, Asn26, Gln38, Arg39, Ser62, His63, Gly65, Arg66, Leu121, Arg122, His169, and Arg170. An ADP-binding site is contributed by Gly213. Residue Gly213 participates in CDP binding. AMP-binding residues include Ala214 and Lys215. Ala214 lines the ATP pocket. Ala214 provides a ligand contact to Mg(2+). Position 218 (Asp218) interacts with CDP. Position 218 (Asp218) interacts with Mg(2+). Lys219 serves as a coordination point for AMP. ATP is bound at residue Lys219. Position 237 (Gly237) interacts with ADP. Gly237 contributes to the CDP binding site. Residues Gly238 and Gly312 each contribute to the AMP site. Positions 238 and 312 each coordinate ATP. The CDP site is built by Gly337 and Phe342. Phe342 serves as a coordination point for ADP. Glu343 serves as a coordination point for AMP. Positions 343, 374, and 375 each coordinate ATP. Asp374 contacts Mg(2+).

It belongs to the phosphoglycerate kinase family. Monomer. It depends on Mg(2+) as a cofactor.

It is found in the cytoplasm. The protein resides in the mitochondrion. It carries out the reaction (2R)-3-phosphoglycerate + ATP = (2R)-3-phospho-glyceroyl phosphate + ADP. It participates in carbohydrate degradation; glycolysis; pyruvate from D-glyceraldehyde 3-phosphate: step 2/5. Its function is as follows. Catalyzes one of the two ATP producing reactions in the glycolytic pathway via the reversible conversion of 1,3-diphosphoglycerate to 3-phosphoglycerate. Both L- and D- forms of purine and pyrimidine nucleotides can be used as substrates, but the activity is much lower on pyrimidines. Negatively regulates the biosynthesis of acetyl-CoA from pyruvate in the mitochondrion. In Yarrowia lipolytica (strain CLIB 122 / E 150) (Yeast), this protein is Phosphoglycerate kinase (PGK1).